The following is a 123-amino-acid chain: Large ribosomal subunit protein bL20 (123 aa).

This sequence belongs to the bacterial ribosomal protein bL20 family.

In terms of biological role, binds directly to 23S ribosomal RNA and is necessary for the in vitro assembly process of the 50S ribosomal subunit. It is not involved in the protein synthesizing functions of that subunit. The polypeptide is Large ribosomal subunit protein bL20 (rplT) (Chlamydia trachomatis serovar D (strain ATCC VR-885 / DSM 19411 / UW-3/Cx)).